We begin with the raw amino-acid sequence, 40 residues long: uncharacterized protein (40 aa).

This is an uncharacterized protein from Haemophilus influenzae (strain ATCC 51907 / DSM 11121 / KW20 / Rd).